We begin with the raw amino-acid sequence, 175 residues long: Small ribosomal subunit protein uS5 (175 aa).

Residues 19–82 (WQERVIQIRR…ADGKKHLIDI (64 aa)) form the S5 DRBM domain.

This sequence belongs to the universal ribosomal protein uS5 family. As to quaternary structure, part of the 30S ribosomal subunit. Contacts proteins S4 and S8.

Its function is as follows. With S4 and S12 plays an important role in translational accuracy. Functionally, located at the back of the 30S subunit body where it stabilizes the conformation of the head with respect to the body. This Nostoc punctiforme (strain ATCC 29133 / PCC 73102) protein is Small ribosomal subunit protein uS5.